Consider the following 263-residue polypeptide: 4-hydroxy-tetrahydrodipicolinate reductase (263 aa).

NAD(+)-binding positions include 8-13 (GACGRM), Asp-34, 99-101 (GTT), and 125-128 (SPNY). The active-site Proton donor/acceptor is the His-157. His-158 contributes to the (S)-2,3,4,5-tetrahydrodipicolinate binding site. The active-site Proton donor is Lys-161. 167–168 (GT) provides a ligand contact to (S)-2,3,4,5-tetrahydrodipicolinate.

It belongs to the DapB family.

It localises to the cytoplasm. It catalyses the reaction (S)-2,3,4,5-tetrahydrodipicolinate + NAD(+) + H2O = (2S,4S)-4-hydroxy-2,3,4,5-tetrahydrodipicolinate + NADH + H(+). The enzyme catalyses (S)-2,3,4,5-tetrahydrodipicolinate + NADP(+) + H2O = (2S,4S)-4-hydroxy-2,3,4,5-tetrahydrodipicolinate + NADPH + H(+). It participates in amino-acid biosynthesis; L-lysine biosynthesis via DAP pathway; (S)-tetrahydrodipicolinate from L-aspartate: step 4/4. Catalyzes the conversion of 4-hydroxy-tetrahydrodipicolinate (HTPA) to tetrahydrodipicolinate. The polypeptide is 4-hydroxy-tetrahydrodipicolinate reductase (Methanosarcina mazei (strain ATCC BAA-159 / DSM 3647 / Goe1 / Go1 / JCM 11833 / OCM 88) (Methanosarcina frisia)).